We begin with the raw amino-acid sequence, 225 residues long: Cytidylate kinase (225 aa).

Residue Gly-10–Thr-18 participates in ATP binding.

The protein belongs to the cytidylate kinase family. Type 1 subfamily.

It localises to the cytoplasm. It carries out the reaction CMP + ATP = CDP + ADP. The catalysed reaction is dCMP + ATP = dCDP + ADP. The chain is Cytidylate kinase from Streptococcus suis (strain 98HAH33).